The primary structure comprises 136 residues: ATP synthase epsilon chain, chloroplastic (136 aa).

This sequence belongs to the ATPase epsilon chain family. F-type ATPases have 2 components, CF(1) - the catalytic core - and CF(0) - the membrane proton channel. CF(1) has five subunits: alpha(3), beta(3), gamma(1), delta(1), epsilon(1). CF(0) has three main subunits: a, b and c.

Its subcellular location is the plastid. It is found in the chloroplast thylakoid membrane. Its function is as follows. Produces ATP from ADP in the presence of a proton gradient across the membrane. This chain is ATP synthase epsilon chain, chloroplastic, found in Chaetosphaeridium globosum (Charophycean green alga).